The primary structure comprises 473 residues: Vasculin (473 aa).

Disordered stretches follow at residues 1–25 (MAQH…SSLN), 44–170 (RRRH…SRTP), and 186–341 (SGFP…HQER). At serine 49 the chain carries Phosphoserine. An Omega-N-methylarginine modification is found at arginine 87. The segment covering 94–117 (NSRSRSSIFHSGKSQGLHENSIPD) has biased composition (polar residues). The segment covering 119–133 (ETGRKEDKRERRQFE) has biased composition (basic and acidic residues). Composition is skewed to polar residues over residues 193-204 (NLQSQPVKNGTG) and 248-286 (NFNT…QQPR). Phosphoserine is present on residues serine 274, serine 276, serine 322, and serine 381. A compositionally biased stretch (basic and acidic residues) spans 293–329 (MRSDKKSEFLKALKRDRVEEEHEDESHAGSEKDDDSF). The disordered stretch occupies residues 450 to 473 (TFKPTIENDDTETSSSDTSDDDDV). Residues 456 to 473 (ENDDTETSSSDTSDDDDV) are compositionally biased toward acidic residues.

The protein belongs to the vasculin family. Interacts with GTF2B, GTF2F2, RNA polymerase II and TBP. As to expression, ubiquitously expressed (at protein level).

Its subcellular location is the nucleus. In terms of biological role, functions as a GC-rich promoter-specific transactivating transcription factor. This is Vasculin (Gpbp1) from Mus musculus (Mouse).